A 266-amino-acid chain; its full sequence is Transcription factor BIP1 (266 aa).

The tract at residues 1–73 (MAMYMPSTAS…DREAQRAIRA (73 aa)) is disordered. Composition is skewed to polar residues over residues 7–22 (STASSTTHIRSPSGTP) and 47–56 (RSVSTLTPSQ). The region spanning 54–95 (PSQLARKRANDREAQRAIRARTKEHIERLEREVEELKSKQNR) is the bZIP domain. The basic motif stretch occupies residues 59–81 (RKRANDREAQRAIRARTKEHIER). The span at 61-73 (RANDREAQRAIRA) shows a compositional bias: basic and acidic residues. The tract at residues 82-89 (LEREVEEL) is leucine-zipper.

Belongs to the bZIP family. Expressed in appressoria.

It localises to the nucleus. Transcription factor that is required for infection of plants hosts. Is not implicated in the development of appressoria or the subsequent penetration of host leaves, but is necessary for the initial establishment of the fungus within plant cells by orchestrating the expression of a unique set of early invasion-related genes within appressoria, encoding secreted effectors, enzymes, secondary metabolism-related enzymes, and signaling membrane receptors. Controls the expression of targeted genes by interacting directly with a 5'-TGACTC-3' motif present in their promoters. The polypeptide is Transcription factor BIP1 (Pyricularia oryzae (strain 70-15 / ATCC MYA-4617 / FGSC 8958) (Rice blast fungus)).